We begin with the raw amino-acid sequence, 500 residues long: Intermediate filament protein ifc-1 (500 aa).

Residues 1 to 36 (MSLYGGIPTNLVSGMSSAGAICTTQIRDAREREKRE) are head. Residues 33–383 (EKREIGLLND…VLLNGANVTT (351 aa)) form the IF rod domain. Residues 37 to 68 (IGLLNDRLADYIEKVRFLKAQNHVLSHDIEIL) form a coil 1A region. Residues 69-81 (RRGFSGGGHISSF) form a linker 1 region. Positions 82-219 (FESEISNCTV…TENSSRIEQE (138 aa)) are coil 1B. The linker 12 stretch occupies residues 220–237 (LIYIHRDTTLENRDYFRQ). The coil 2 stretch occupies residues 238–383 (ELQAAMRDIR…VLLNGANVTT (146 aa)). The segment at 384-496 (YVSNSTGAAG…RHHESSYSYS (113 aa)) is tail.

This sequence belongs to the intermediate filament family.

It is found in the cytoplasm. In terms of biological role, cytoplasmic intermediate filaments provide mechanical strength to cells. Not essential protein. The chain is Intermediate filament protein ifc-1 (ifc-1) from Caenorhabditis elegans.